The primary structure comprises 419 residues: Circumsporozoite protein (419 aa).

Positions 1-23 (MKNFNLLAVSSILLVDLFRTHWG) are cleaved as a signal peptide. The interval 50-111 (AQVRQSASRG…GNAGGNAGGN (62 aa)) is disordered. Over residues 65–95 (NPKEEDGADKKKKKDEKQVEPKKPRENKLKQ) the composition is skewed to basic and acidic residues. The interval 81-89 (KQVEPKKPR) is required for the binding to heparan sulfate proteoglycans (HSPGs) on the surface of host hepatocytes. The segment at 92 to 96 (KLKQP) is region I; contains the proteolytic cleavage site. 38 consecutive repeat copies span residues 99-102 (NADG), 103-106 (NAGG), 107-110 (NAGG), 111-114 (NAGG), 115-118 (NAGG), 119-122 (NAGG), 123-126 (NADG), 127-130 (NAGG), 131-134 (NAGG), 135-138 (NAGG), 139-142 (NAGG), 143-146 (NAGG), 147-150 (NADG), 151-154 (NAGG), 155-158 (NADG), 159-162 (NAGG), 163-166 (NADG), 167-170 (NAGG), 171-174 (NAGG), 175-178 (NAGG), 179-182 (NADG), 183-186 (NAGG), 187-190 (NAGG), 191-194 (NAGG), 195-198 (NAGG), 199-202 (NAGG), 203-206 (NAGG), 207-210 (NAGG), 211-214 (NADG), 215-218 (NAGG), 219-222 (NAGG), 223-226 (NAGG), 227-230 (NADG), 231-234 (NAGG), 235-238 (NAGG), 239-242 (NAGG), 243-246 (NAGG), and 247-250 (NAGG). The 54 X 4 AA approximate tandem repeats of N-A-G-G stretch occupies residues 99 to 314 (NADGNAGGNA…GGNAGANAGN (216 aa)). The tract at residues 146–237 (GNADGNAGGN…ADGNAGGNAG (92 aa)) is disordered. The 39; approximate repeat unit spans residues 251 to 254 (TAGG). 13 consecutive repeat copies span residues 255 to 258 (NADG), 259 to 262 (NAGG), 263 to 266 (NAGG), 267 to 270 (NAGG), 271 to 274 (NAGG), 275 to 278 (NAGG), 279 to 282 (NAGG), 283 to 286 (NAGG), 287 to 290 (NAGG), 291 to 294 (NAGG), 295 to 298 (NAGG), 299 to 302 (NAGG), and 303 to 306 (NAGG). One copy of the 53; approximate repeat lies at 307–310 (NAGA). One copy of the 54; approximate repeat lies at 311–314 (NAGN). Positions 312–332 (AGNKKAGDAGAGQGQNNEAAN) are disordered. Positions 345–397 (KIRSTISTEWSPCSVTCGKGVRMRKKVSAANKKPEELDVNDLETEVCTMDKCA) constitute a TSP type-1 domain. 2 disulfides stabilise this stretch: cysteine 357-cysteine 391 and cysteine 361-cysteine 396. Residue threonine 360 is glycosylated (O-linked (Fuc) threonine). Cysteine 396 carries the GPI-anchor amidated cysteine lipid modification. A propeptide spans 397–419 (AGIFNVVSNSLRLVILLVLALFN) (removed in mature form).

It belongs to the plasmodium circumsporozoite protein family. In terms of processing, during host cell invasion, proteolytically cleaved at the cell membrane in the region I by a papain-like cysteine protease of parasite origin. Cleavage is triggered by the sporozoite contact with highly sulfated heparan sulfate proteoglycans (HSPGs) present on the host hepatocyte cell surface. Cleavage exposes the TSP type-1 (TSR) domain and is required for productive invasion of host hepatocytes but not for adhesion to the host cell membrane. Cleavage is dispensable for sporozoite development in the oocyst, motility and for traversal of host and vector cells. O-glycosylated; maybe by POFUT2.

Its subcellular location is the cell membrane. The protein localises to the cytoplasm. Its function is as follows. Essential sporozoite protein. In the mosquito vector, required for sporozoite development in the oocyst, migration through the vector hemolymph and entry into the vector salivary glands. In the vertebrate host, required for sporozoite migration through the host dermis and infection of host hepatocytes. Binds to highly sulfated heparan sulfate proteoglycans (HSPGs) on the surface of host hepatocytes. Functionally, in the vertebrate host, binds to highly sulfated heparan sulfate proteoglycans (HSPGs) on the surface of host hepatocytes and is required for sporozoite invasion of the host hepatocytes. The chain is Circumsporozoite protein from Plasmodium cynomolgi (strain Mulligan/NIH).